Here is a 290-residue protein sequence, read N- to C-terminus: MASLKEVKTRINSVQSTRKITSAMKMVASAKLHKAQGAIENMLPYQRKLNKILTNFLSADLPVESPFCVERPVKRVAIVAFSSNSSLCGAFNANVLKMFLQTVGEYRELGQDNILIYPVGKKIEEAVKKLGFFPQGSYQKLADKPSYDEAAALAKLLMELFLEKNIDRVELIYHHFKSMGVQELLRERYLPIDLSAVQNDEERGGVVNDYIIEPSAAQLIADLIPQVLSQKIFTAALDSNASEHAARTLAMQIATDNANELIQELTKQYNKTRQQAITNELLDIVGGSMA.

Belongs to the ATPase gamma chain family. In terms of assembly, F-type ATPases have 2 components, CF(1) - the catalytic core - and CF(0) - the membrane proton channel. CF(1) has five subunits: alpha(3), beta(3), gamma(1), delta(1), epsilon(1). CF(0) has three main subunits: a, b and c.

The protein localises to the cell inner membrane. In terms of biological role, produces ATP from ADP in the presence of a proton gradient across the membrane. The gamma chain is believed to be important in regulating ATPase activity and the flow of protons through the CF(0) complex. This is ATP synthase gamma chain from Bacteroides fragilis (strain ATCC 25285 / DSM 2151 / CCUG 4856 / JCM 11019 / LMG 10263 / NCTC 9343 / Onslow / VPI 2553 / EN-2).